The primary structure comprises 103 residues: Transcriptional regulator WhiB7 (103 aa).

Residues Cys-17, Cys-49, Cys-52, and Cys-58 each contribute to the [4Fe-4S] cluster site. The 58-residue stretch at 25–82 (PCHVGDPDLWFAENPGDLERAKALCAGCPIRVQCLTAALERQEPWGVWGGEILDRGSI) folds into the 4Fe-4S Wbl-type domain. Residues 82-103 (IVARKRPRGRPRKDSGGNPAAA) are disordered.

Belongs to the WhiB family. The cofactor is [4Fe-4S] cluster. The Fe-S cluster can be nitrosylated by nitric oxide (NO). In terms of processing, upon Fe-S cluster removal intramolecular disulfide bonds are formed.

The protein localises to the cytoplasm. Acts as a transcriptional regulator. Probably redox-responsive. The apo- but not holo-form probably binds DNA. Participates in maintaining a reduced cytoplasmic (MSH/MSSM) environment under normal growth conditions and directly or indirectly controls the concentration of mycothiol (MSH + MSSM). The protein is Transcriptional regulator WhiB7 (whiB7) of Mycolicibacterium smegmatis (strain ATCC 700084 / mc(2)155) (Mycobacterium smegmatis).